The chain runs to 297 residues: Protoheme IX farnesyltransferase 1 (297 aa).

9 helical membrane-spanning segments follow: residues 23–43, 45–65, 93–113, 117–137, 145–165, 171–191, 216–236, 241–261, and 277–297; these read VVVL…RAGV, WSVL…AAAV, LPAL…LLMF, LTAW…TGFL, IVIG…AVSG, PLLL…ALAI, LHIL…YAIH, LYLV…WVLY, and IGYL…LLNL.

Belongs to the UbiA prenyltransferase family. Protoheme IX farnesyltransferase subfamily.

It is found in the cell inner membrane. It catalyses the reaction heme b + (2E,6E)-farnesyl diphosphate + H2O = Fe(II)-heme o + diphosphate. It functions in the pathway porphyrin-containing compound metabolism; heme O biosynthesis; heme O from protoheme: step 1/1. In terms of biological role, converts heme B (protoheme IX) to heme O by substitution of the vinyl group on carbon 2 of heme B porphyrin ring with a hydroxyethyl farnesyl side group. The sequence is that of Protoheme IX farnesyltransferase 1 from Pseudomonas putida (strain W619).